We begin with the raw amino-acid sequence, 541 residues long: Berberine bridge enzyme-like 1 (541 aa).

The first 20 residues, Met1 to Ala20, serve as a signal peptide directing secretion. 7 N-linked (GlcNAc...) asparagine glycosylation sites follow: Asn25, Asn38, Asn73, Asn136, Asn302, Asn339, and Asn357. A disulfide bridge connects residues Cys35 and Cys98. In terms of domain architecture, FAD-binding PCMH-type spans Thr76–Val255. A cross-link (6-(S-cysteinyl)-8alpha-(pros-histidyl)-FAD (His-Cys)) is located at residues His113 to Cys180.

This sequence belongs to the oxygen-dependent FAD-linked oxidoreductase family. The cofactor is FAD. Post-translationally, the FAD cofactor is bound via a bicovalent 6-S-cysteinyl, 8alpha-N1-histidyl FAD linkage. Accumulates in cell walls of etiolated hypocotyls.

Its subcellular location is the secreted. The protein localises to the cell wall. This is Berberine bridge enzyme-like 1 from Arabidopsis thaliana (Mouse-ear cress).